The primary structure comprises 43 residues: uncharacterized protein (43 aa).

Residues 1 to 37 (MIIKNNNNNNNNNNNNNNNNNNNNNNNNNNNNNNNNN) are compositionally biased toward low complexity. The segment at 1-43 (MIIKNNNNNNNNNNNNNNNNNNNNNNNNNNNNNNNNNIEIIIK) is disordered.

This is an uncharacterized protein from Dictyostelium discoideum (Social amoeba).